The following is a 554-amino-acid chain: MRSDAVKKGIERAPHRALFKAMGYTDEELERPLIGVVNSRNEIVPGHIHLDKIAEAVKAGIRMAGGTPVEFGAIGVCDGIAMGHTGMKYSLATRELIADSCEAMALAHSFDGMVFIPNCDKIVPGMLMAAARINVPAIVVSGGPMLSLRHNDKNLDLNSVFEAVGAYKAGKMTEKEVWEYEEKACPGCGSCSGMFTANSMNCLTEVLGMGLPGNGTVPAVYAERIRLAKKAGMKIVELVEKDIKPSDILTPKAFENALAVDMALGCSTNSVLHLPAIANEVGMEINLDIINEISSKVPNLCKLAPAGHHHVQDLYAAGGIPAVMKELSKKNLLHLDLITVTGKTVRENIENAKVRDYEVIRSIDNPYSPTGGIAVLRGNLAPDGAVVKRSAVAPEMLVHKGPARVFDSEDAAIEAIYNGKINKGDVVIIRYEGPKGGPGMREMLSPTSAIAGMGLDKDVALITDGRFSGATRGASIGHVSPEAMAGGPIAIVRDGDIISIDIPNGKLDVEIPDSEIQKRLKEWKAPAPKITKGYLGRYAKLVSSANKGAILENK.

D78 contributes to the Mg(2+) binding site. Position 119 (C119) interacts with [2Fe-2S] cluster. D120 and K121 together coordinate Mg(2+). At K121 the chain carries N6-carboxylysine. [2Fe-2S] cluster is bound at residue C191. E442 contacts Mg(2+). Catalysis depends on S468, which acts as the Proton acceptor.

The protein belongs to the IlvD/Edd family. Homodimer. [2Fe-2S] cluster is required as a cofactor. Requires Mg(2+) as cofactor.

The catalysed reaction is (2R)-2,3-dihydroxy-3-methylbutanoate = 3-methyl-2-oxobutanoate + H2O. It carries out the reaction (2R,3R)-2,3-dihydroxy-3-methylpentanoate = (S)-3-methyl-2-oxopentanoate + H2O. It functions in the pathway amino-acid biosynthesis; L-isoleucine biosynthesis; L-isoleucine from 2-oxobutanoate: step 3/4. It participates in amino-acid biosynthesis; L-valine biosynthesis; L-valine from pyruvate: step 3/4. Functions in the biosynthesis of branched-chain amino acids. Catalyzes the dehydration of (2R,3R)-2,3-dihydroxy-3-methylpentanoate (2,3-dihydroxy-3-methylvalerate) into 2-oxo-3-methylpentanoate (2-oxo-3-methylvalerate) and of (2R)-2,3-dihydroxy-3-methylbutanoate (2,3-dihydroxyisovalerate) into 2-oxo-3-methylbutanoate (2-oxoisovalerate), the penultimate precursor to L-isoleucine and L-valine, respectively. This chain is Dihydroxy-acid dehydratase, found in Acetivibrio thermocellus (strain ATCC 27405 / DSM 1237 / JCM 9322 / NBRC 103400 / NCIMB 10682 / NRRL B-4536 / VPI 7372) (Clostridium thermocellum).